Here is a 487-residue protein sequence, read N- to C-terminus: 3-octaprenyl-4-hydroxybenzoate carboxy-lyase (487 aa).

Asn-172 provides a ligand contact to Mn(2+). Residues 175-177, 189-191, and 194-195 contribute to the prenylated FMN site; these read IYR, RWL, and RG. Glu-238 lines the Mn(2+) pocket. Asp-287 (proton donor) is an active-site residue.

This sequence belongs to the UbiD family. Homohexamer. It depends on prenylated FMN as a cofactor. The cofactor is Mn(2+).

It is found in the cell membrane. It carries out the reaction a 4-hydroxy-3-(all-trans-polyprenyl)benzoate + H(+) = a 2-(all-trans-polyprenyl)phenol + CO2. It functions in the pathway cofactor biosynthesis; ubiquinone biosynthesis. Catalyzes the decarboxylation of 3-octaprenyl-4-hydroxy benzoate to 2-octaprenylphenol, an intermediate step in ubiquinone biosynthesis. This is 3-octaprenyl-4-hydroxybenzoate carboxy-lyase from Thiobacillus denitrificans (strain ATCC 25259 / T1).